The following is a 363-amino-acid chain: Double-strand-specific pac1 ribonuclease (363 aa).

Disordered stretches follow at residues 1 to 35 and 92 to 138; these read MGRF…KRSS and SRHD…PPLR. Positions 13–22 are enriched in low complexity; the sequence is DSSSSASDSL. Residues 24–35 show a composition bias toward basic residues; that stretch reads RGRRSLGHKRSS. Residue serine 122 is modified to Phosphoserine. One can recognise an RNase III domain in the interval 139 to 262; sequence SEKLKEQVFM…YLGALILDGQ (124 aa). A DRBM domain is found at 285–356; the sequence is RPIDKLAKSK…AMQALEVLAK (72 aa).

The cofactor is Mg(2+).

The catalysed reaction is Endonucleolytic cleavage to 5'-phosphomonoester.. Functionally, digests double-stranded RNA. Converts long double-stranded RNAs into short oligonucleotides, leaving 5'-phosphates on their cleavage products. Probably inhibits mating and meiosis by degrading a specific mRNA required for sexual development. This Schizosaccharomyces pombe (strain 972 / ATCC 24843) (Fission yeast) protein is Double-strand-specific pac1 ribonuclease (pac1).